Consider the following 276-residue polypeptide: Aurora kinase C (276 aa).

In terms of domain architecture, Protein kinase spans phenylalanine 16–valine 266. Residues leucine 22–valine 30 and lysine 45 contribute to the ATP site. The active-site Proton acceptor is aspartate 139. Threonine 171 carries the post-translational modification Phosphothreonine; by PKA.

The protein belongs to the protein kinase superfamily. Ser/Thr protein kinase family. Aurora subfamily. In terms of assembly, component of the chromosomal passenger complex (CPC) composed of at least BIRC5/survivin, CDCA8/borealin, INCENP, AURKB or AURKC; predominantly independent AURKB- and AURKC-containing complexes exist; in the complex interacts directly with BIRC5/survivin and INCENP. Interacts with TACC1. Expressed only in testis.

It localises to the nucleus. The protein localises to the chromosome. Its subcellular location is the centromere. It is found in the cytoplasm. The protein resides in the cytoskeleton. It localises to the spindle. It catalyses the reaction L-seryl-[protein] + ATP = O-phospho-L-seryl-[protein] + ADP + H(+). It carries out the reaction L-threonyl-[protein] + ATP = O-phospho-L-threonyl-[protein] + ADP + H(+). With respect to regulation, okadaic acid, an inhibitor of protein phosphatase 1 (PP1), protein phosphatase 2A (PP2A) and protein phosphatase 5 (PP5), increases AURKC activity. AURKC is also stabilized through its interaction with INCENP, which also acts as an activator. In terms of biological role, serine/threonine-protein kinase component of the chromosomal passenger complex (CPC), a complex that acts as a key regulator of mitosis. The CPC complex has essential functions at the centromere in ensuring correct chromosome alignment and segregation and is required for chromatin-induced microtubule stabilization and spindle assembly. Also plays a role in meiosis and more particularly in spermatogenesis. Has redundant cellular functions with AURKB and can rescue an AURKB knockdown. Like AURKB, AURKC phosphorylates histone H3 at 'Ser-10' and 'Ser-28'. AURKC phosphorylates the CPC complex subunits BIRC5/survivin and INCENP leading to increased AURKC activity. Phosphorylates TACC1, another protein involved in cell division, at 'Ser-228'. The protein is Aurora kinase C (Aurkc) of Mus musculus (Mouse).